A 476-amino-acid chain; its full sequence is Angiotensinogen (476 aa).

The N-terminal stretch at 1-24 is a signal peptide; it reads MAPAGLSLGAAILCLLAWAGLAAG. Residues Cys42 and Cys161 are joined by a disulfide bond. Residues Asn295, Asn319, Asn362, and Asn401 are each glycosylated (N-linked (GlcNAc...) asparagine).

This sequence belongs to the serpin family. In terms of processing, in response to low blood pressure, the enzyme renin/REN cleaves angiotensinogen to produce angiotensin-1. Angiotensin-1 is a substrate of ACE (angiotensin converting enzyme) that removes a dipeptide to yield the physiologically active peptide angiotensin-2. Angiotensin-1 and angiotensin-2 can be further processed to generate angiotensin-3, angiotensin-4. Angiotensin 1-9 is cleaved from angiotensin-1 by ACE2 and can be further processed by ACE to produce angiotensin 1-7, angiotensin 1-5 and angiotensin 1-4. Angiotensin 1-7 has also been proposed to be cleaved from angiotensin-2 by ACE2 or from angiotensin-1 by MME (neprilysin). Post-translationally, the disulfide bond is labile. Angiotensinogen is present in the circulation in a near 40:60 ratio with the oxidized disulfide-bonded form, which preferentially interacts with receptor-bound renin.

The protein localises to the secreted. Essential component of the renin-angiotensin system (RAS), a potent regulator of blood pressure, body fluid and electrolyte homeostasis. Its function is as follows. Acts directly on vascular smooth muscle as a potent vasoconstrictor, affects cardiac contractility and heart rate through its action on the sympathetic nervous system, and alters renal sodium and water absorption through its ability to stimulate the zona glomerulosa cells of the adrenal cortex to synthesize and secrete aldosterone. Acts by binding to angiotensin receptors AGTR1 and AGTR2. Also binds the DEAR/FBXW7-AS1 receptor. In terms of biological role, stimulates aldosterone release. Functionally, is a ligand for the G-protein coupled receptor MAS1. Has vasodilator and antidiuretic effects. Has an antithrombotic effect that involves MAS1-mediated release of nitric oxide from platelets. The chain is Angiotensinogen (AGT) from Bos taurus (Bovine).